The following is a 1055-amino-acid chain: Cellulose synthase A catalytic subunit 9 [UDP-forming] (1055 aa).

Over 1–268 (MEASAGLVAG…ASSKVNPYRM (268 aa)) the chain is Cytoplasmic. Residues Cys-37, Cys-40, Cys-56, Cys-59, Cys-64, Cys-67, Cys-79, and Cys-82 each contribute to the Zn(2+) site. An RING-type; degenerate zinc finger spans residues 37-83 (CEICGDEVGRTVDGDLFVACNECGFPVCRPCYEYERREGTQNCPQCK). A helical transmembrane segment spans residues 269-289 (VIILRLVVLGFFLRYRILHPV). Residues 290–291 (PD) lie on the Extracellular side of the membrane. Residues 292–312 (AIPLWLTSIICEIWFAVSWIL) traverse the membrane as a helical segment. Over 313-831 (DQFPKWYPID…LERFSYINTT (519 aa)) the chain is Cytoplasmic. UDP-alpha-D-glucose-binding residues include Ser-351, Lys-357, Glu-358, and Asp-387. Asp-387 is a catalytic residue. A coiled-coil region spans residues 439-468 (NFVQERRAMKREYEEFKVRINALVAKAQKV). Lys-528 serves as a coordination point for UDP-alpha-D-glucose. Mn(2+)-binding residues include Lys-529 and Asp-553. Asp-753 is an active-site residue. The chain crosses the membrane as a helical span at residues 832–852 (IYPFTSLPLLAYCTLPAVCLL). The Extracellular segment spans residues 853 to 860 (TGKFIMPP). Residues 861 to 881 (ISTFASLFFIALFISIFATGI) traverse the membrane as a helical segment. The Cytoplasmic portion of the chain corresponds to 882-899 (LEMRWSGVSIEEWWRNEQ). A helical transmembrane segment spans residues 900-920 (FWVIGGVSAHLFAVVQGLLKV). Residues 921–951 (LAGIDTNFTVTSKATGDEDDEFAELYAFKWT) are Extracellular-facing. A glycan (N-linked (GlcNAc...) asparagine) is linked at Asn-927. A helical transmembrane segment spans residues 952–972 (TLLIPPTTLLILNIIGVVAGV). Topologically, residues 973–983 (SDAINNGSEAW) are cytoplasmic. Residues 984-1004 (GPLFGKLFFAFWVIVHLYPFL) form a helical membrane-spanning segment. Residues 1005–1013 (KGLMGRQNR) lie on the Extracellular side of the membrane. The helical transmembrane segment at 1014-1034 (TPTIVVIWSVLLASIFSLLWV) threads the bilayer. Residues 1035–1055 (RIDPFTIKARGPDVRQCGINC) are Cytoplasmic-facing.

Belongs to the glycosyltransferase 2 family. Plant cellulose synthase subfamily. It depends on Mn(2+) as a cofactor. Zn(2+) is required as a cofactor.

The protein localises to the cell membrane. The enzyme catalyses [(1-&gt;4)-beta-D-glucosyl](n) + UDP-alpha-D-glucose = [(1-&gt;4)-beta-D-glucosyl](n+1) + UDP + H(+). It participates in glycan metabolism; plant cellulose biosynthesis. Its function is as follows. Catalytic subunit of cellulose synthase terminal complexes ('rosettes'), required for beta-1,4-glucan microfibril crystallization, a major mechanism of the cell wall formation. Involved in the secondary cell wall formation. This Oryza sativa subsp. indica (Rice) protein is Cellulose synthase A catalytic subunit 9 [UDP-forming] (CESA9).